Consider the following 155-residue polypeptide: SsrA-binding protein (155 aa).

It belongs to the SmpB family.

It localises to the cytoplasm. Functionally, required for rescue of stalled ribosomes mediated by trans-translation. Binds to transfer-messenger RNA (tmRNA), required for stable association of tmRNA with ribosomes. tmRNA and SmpB together mimic tRNA shape, replacing the anticodon stem-loop with SmpB. tmRNA is encoded by the ssrA gene; the 2 termini fold to resemble tRNA(Ala) and it encodes a 'tag peptide', a short internal open reading frame. During trans-translation Ala-aminoacylated tmRNA acts like a tRNA, entering the A-site of stalled ribosomes, displacing the stalled mRNA. The ribosome then switches to translate the ORF on the tmRNA; the nascent peptide is terminated with the 'tag peptide' encoded by the tmRNA and targeted for degradation. The ribosome is freed to recommence translation, which seems to be the essential function of trans-translation. This chain is SsrA-binding protein, found in Helicobacter hepaticus (strain ATCC 51449 / 3B1).